A 204-amino-acid polypeptide reads, in one-letter code: N-(5'-phosphoribosyl)anthranilate isomerase (204 aa).

It belongs to the TrpF family.

It carries out the reaction N-(5-phospho-beta-D-ribosyl)anthranilate = 1-(2-carboxyphenylamino)-1-deoxy-D-ribulose 5-phosphate. Its pathway is amino-acid biosynthesis; L-tryptophan biosynthesis; L-tryptophan from chorismate: step 3/5. The sequence is that of N-(5'-phosphoribosyl)anthranilate isomerase from Bacillus cereus (strain B4264).